Here is a 438-residue protein sequence, read N- to C-terminus: Glutamate--tRNA ligase 2 (438 aa).

A 'HIGH' region motif is present at residues 6–16; the sequence is PSPTGDMHTGN. Residues 231–235 carry the 'KMSKS' region motif; the sequence is KMSKR. An ATP-binding site is contributed by Lys234.

Belongs to the class-I aminoacyl-tRNA synthetase family. Glutamate--tRNA ligase type 1 subfamily. Monomer.

It is found in the cytoplasm. It catalyses the reaction tRNA(Glu) + L-glutamate + ATP = L-glutamyl-tRNA(Glu) + AMP + diphosphate. Its function is as follows. Catalyzes the attachment of glutamate to tRNA(Glu) in a two-step reaction: glutamate is first activated by ATP to form Glu-AMP and then transferred to the acceptor end of tRNA(Glu). The chain is Glutamate--tRNA ligase 2 from Wolinella succinogenes (strain ATCC 29543 / DSM 1740 / CCUG 13145 / JCM 31913 / LMG 7466 / NCTC 11488 / FDC 602W) (Vibrio succinogenes).